A 330-amino-acid chain; its full sequence is Phenylalanine--tRNA ligase alpha subunit (330 aa).

E255 contacts Mg(2+).

Belongs to the class-II aminoacyl-tRNA synthetase family. Phe-tRNA synthetase alpha subunit type 1 subfamily. In terms of assembly, tetramer of two alpha and two beta subunits. Mg(2+) serves as cofactor.

It is found in the cytoplasm. It catalyses the reaction tRNA(Phe) + L-phenylalanine + ATP = L-phenylalanyl-tRNA(Phe) + AMP + diphosphate + H(+). This is Phenylalanine--tRNA ligase alpha subunit from Acinetobacter baylyi (strain ATCC 33305 / BD413 / ADP1).